We begin with the raw amino-acid sequence, 423 residues long: COP9 signalosome complex subunit 3 (423 aa).

Residue Ala2 is modified to N-acetylalanine. Positions 197 to 365 (NFERALYFYE…GMVSFHDNPE (169 aa)) constitute a PCI domain. The disordered stretch occupies residues 402-423 (QFVQKSMGSQEDDSGNKPSSYS). Phosphoserine occurs at positions 407, 410, and 423.

This sequence belongs to the CSN3 family. Component of the CSN complex, composed of COPS1/GPS1, COPS2, COPS3, COPS4, COPS5, COPS6, COPS7 (COPS7A or COPS7B), COPS8 and COPS9. In the complex, it probably interacts directly with COPS1, COPS4, COPS8 and COPS9. Interacts with CK2 and PKD. Interacts with the translation initiation factor EIF3S6 and IKBKG. Interacts with ERCC6. In terms of tissue distribution, widely expressed.

The protein localises to the cytoplasm. The protein resides in the nucleus. Its function is as follows. Component of the COP9 signalosome complex (CSN), a complex involved in various cellular and developmental processes. The CSN complex is an essential regulator of the ubiquitin (Ubl) conjugation pathway by mediating the deneddylation of the cullin subunits of SCF-type E3 ligase complexes, leading to decrease the Ubl ligase activity of SCF-type complexes such as SCF, CSA or DDB2. The complex is also involved in phosphorylation of p53/TP53, c-jun/JUN, IkappaBalpha/NFKBIA, ITPK1 and IRF8/ICSBP, possibly via its association with CK2 and PKD kinases. CSN-dependent phosphorylation of TP53 and JUN promotes and protects degradation by the Ubl system, respectively. Essential to maintain the survival of epiblast cells and thus the development of the postimplantation embryo. The protein is COP9 signalosome complex subunit 3 (Cops3) of Mus musculus (Mouse).